The following is a 1074-amino-acid chain: MKFEKNTDIFILPDFIRIQLESFHRFIEKGLLEEFQRFPVIRDSSGELSYFLNGKRYKLQEPSFNEQEAIYQASTYSSELYVPAQITHTKSEKTKSEIILIGNIPIMTARGNFIINGASRVIVNQILRSPGLYYGSELDAQANITYSCTFISEWGGRLKLEMDNKRRIWVRLSKKRKIPVLLLLLAMGLNWKDLEKLISRPSLLLSYLSKEKRTPYSPEEAIIELYRHSCSVSGEISFSENIRKELYHKFFKIRCEIGSIGRLNINKKLNLDIPEEERFLVPQDLIAAINSLIEKSFKIVNLDDIDHLKNRRVHLIADMLQSQVRIALNRLKRMIAEVMRGINKRKNLPNPQSLVTPKPLVATFQEFFGSHPLCQFMDQTNPLAEITHKRRISSLGPGGLTQKTATFNVRDIHPSHYGKICPIETPEGQNAGLVSSLAILANINQNGFIESPFLKLHKNEYKQLTGSEHLCSEQEEYYRITTGEHSRETAEKKGKPTPIRYRQEFSATAFHFLHFRDILPIQYFSIATSLIPFLEHDDANRALMGSNMQRQAVPLLRPEKPIVGTGLEGQVALDSAALVLSKIEGKVDFVDGRNINIRSNIVINEFFSFQLINYERSNQNTCLHQKPIVKKDDYVKKGELLADASSTLGGEISLGNNILVAYMPWEGYNFEDAVLINERLIYEDIYTSIHIEKYEIEVNMTSLGPEKITKKIPHLSEYLLRNLDVNGLILLGSWVKTGDVLVGKLTPREPGESLRLPEGRLLHAIFGIKASSFFETCLKVAPGAEGRVIDVRWVESANKLTQKYIKTVNIYILQKRKIQVGDKIAGRHGNKGVISRILPREDMPYIQDGTPIDMVLSPLGVPSRMNLGQIFECLLGLAGESLKKHYRIMPFDERHEREASRKLAFSELYQAKKFTGHSWLFEPDTPGKSQLFDGRTGQTFENAITVGKAYILKLIHQVDDKIHARSTGPYSMVTQQPLGGKARRGGQRMGEMEVWALEGFGAAYTLQELLTRKSDDMKGRNEALGAIVTGNLIPKPNTTPESFKLLMRELRCLCLNIHHCSLFQENLSMKNIEF.

This sequence belongs to the RNA polymerase beta chain family. In plastids the minimal PEP RNA polymerase catalytic core is composed of four subunits: alpha, beta, beta', and beta''. When a (nuclear-encoded) sigma factor is associated with the core the holoenzyme is formed, which can initiate transcription.

The protein localises to the plastid. The protein resides in the chloroplast. It catalyses the reaction RNA(n) + a ribonucleoside 5'-triphosphate = RNA(n+1) + diphosphate. Its function is as follows. DNA-dependent RNA polymerase catalyzes the transcription of DNA into RNA using the four ribonucleoside triphosphates as substrates. In Chara vulgaris (Common stonewort), this protein is DNA-directed RNA polymerase subunit beta.